A 192-amino-acid chain; its full sequence is MFAVENGLQGDPRLKAISDAIRVIPHFPKTGIMFQDITTLLLDPVAFKHVVDIFVDRYKHMNISLVAGVEARGFIFGPPIALAIGAKFVPLRKPGKLPGRVISEEYELEYGRDCLEMSVEAVKSEERALIIDDLVATGGTLSASINLLERAGAEVVECACVVGLPKFKGQCKLKGKPLYVLVEPNQFDELTL.

The protein belongs to the purine/pyrimidine phosphoribosyltransferase family. In terms of assembly, homodimer.

The protein localises to the cytoplasm. The enzyme catalyses AMP + diphosphate = 5-phospho-alpha-D-ribose 1-diphosphate + adenine. The protein operates within purine metabolism; AMP biosynthesis via salvage pathway; AMP from adenine: step 1/1. Functionally, catalyzes a salvage reaction resulting in the formation of AMP, that is energically less costly than de novo synthesis. May contribute to the recycling of adenine into adenylate nucleotides and the inactivation of cytokinins by phosphoribosylation. Possesses low activity toward adenine and cytokinins. The chain is Adenine phosphoribosyltransferase 2 (APT2) from Arabidopsis thaliana (Mouse-ear cress).